Reading from the N-terminus, the 471-residue chain is Cell division protein FtsP (471 aa).

A signal peptide (tat-type signal) is located at residues 1–27 (MSLNRRQFIQASGLALCAGMTPLAAKA). One can recognise a Plastocyanin-like domain in the interval 229 to 287 (VRLRLLNASNSRRYVMRLSDGRAMNVIASDQGLLPAPMAVNQLSLAPGERREILIDMSQ).

The protein belongs to the FtsP family. In terms of processing, predicted to be exported by the Tat system. The position of the signal peptide cleavage has not been experimentally proven.

Its subcellular location is the periplasm. Its function is as follows. Cell division protein that is required for growth during stress conditions. May be involved in protecting or stabilizing the divisomal assembly under conditions of stress. In Pectobacterium atrosepticum (strain SCRI 1043 / ATCC BAA-672) (Erwinia carotovora subsp. atroseptica), this protein is Cell division protein FtsP.